The chain runs to 149 residues: Large ribosomal subunit protein bL9 (149 aa).

The protein belongs to the bacterial ribosomal protein bL9 family.

In terms of biological role, binds to the 23S rRNA. This Klebsiella pneumoniae subsp. pneumoniae (strain ATCC 700721 / MGH 78578) protein is Large ribosomal subunit protein bL9.